Consider the following 354-residue polypeptide: Selenide, water dikinase (354 aa).

Cys-23 is an active-site residue. ATP is bound by residues Lys-26 and 54 to 56; that span reads TSD. Residue Asp-57 coordinates Mg(2+). ATP-binding positions include Asp-74, Asp-97, and 145–147; that span reads GHS. Asp-97 is a binding site for Mg(2+). A Mg(2+)-binding site is contributed by Asp-233.

This sequence belongs to the selenophosphate synthase 1 family. Class I subfamily. Homodimer. Mg(2+) serves as cofactor.

It catalyses the reaction hydrogenselenide + ATP + H2O = selenophosphate + AMP + phosphate + 2 H(+). Its function is as follows. Synthesizes selenophosphate from selenide and ATP. The protein is Selenide, water dikinase of Burkholderia ambifaria (strain MC40-6).